We begin with the raw amino-acid sequence, 494 residues long: Guanosine-5'-triphosphate,3'-diphosphate pyrophosphatase (494 aa).

Belongs to the GppA/Ppx family. GppA subfamily.

It catalyses the reaction guanosine 3'-diphosphate 5'-triphosphate + H2O = guanosine 3',5'-bis(diphosphate) + phosphate + H(+). Its pathway is purine metabolism; ppGpp biosynthesis; ppGpp from GTP: step 2/2. In terms of biological role, catalyzes the conversion of pppGpp to ppGpp. Guanosine pentaphosphate (pppGpp) is a cytoplasmic signaling molecule which together with ppGpp controls the 'stringent response', an adaptive process that allows bacteria to respond to amino acid starvation, resulting in the coordinated regulation of numerous cellular activities. This chain is Guanosine-5'-triphosphate,3'-diphosphate pyrophosphatase, found in Cronobacter sakazakii (strain ATCC BAA-894) (Enterobacter sakazakii).